The following is a 478-amino-acid chain: UDP-N-acetylmuramate--L-alanine ligase (478 aa).

122 to 128 (GTHGKTT) contributes to the ATP binding site.

Belongs to the MurCDEF family.

It localises to the cytoplasm. The enzyme catalyses UDP-N-acetyl-alpha-D-muramate + L-alanine + ATP = UDP-N-acetyl-alpha-D-muramoyl-L-alanine + ADP + phosphate + H(+). The protein operates within cell wall biogenesis; peptidoglycan biosynthesis. Its function is as follows. Cell wall formation. In Stenotrophomonas maltophilia (strain K279a), this protein is UDP-N-acetylmuramate--L-alanine ligase.